Reading from the N-terminus, the 100-residue chain is UPF0213 protein YhbQ (100 aa).

One can recognise a GIY-YIG domain in the interval 2 to 77 (TPWFLYLIRT…KQLTKRQKER (76 aa)).

The protein belongs to the UPF0213 family.

In Shigella dysenteriae serotype 1 (strain Sd197), this protein is UPF0213 protein YhbQ.